The following is a 39-amino-acid chain: Decorsin (39 aa).

The interval 27 to 38 is high affinity binding domain; the sequence is CRFPRGDADPYC. Residues 31–33 carry the Cell attachment site motif; it reads RGD.

This sequence belongs to the ornatin family.

It localises to the secreted. Inhibits fibrinogen interaction with platelet receptors expressed on glycoprotein IIb-IIIa complex. May prevent blood from clotting during either feeding and/or storage of ingested blood. This Macrobdella decora (North American leech) protein is Decorsin.